The sequence spans 181 residues: uncharacterized protein (181 aa).

The next 4 helical transmembrane spans lie at 3 to 23, 67 to 87, 92 to 112, and 159 to 179; these read LSQTALFIGSIINLNALVLIL, ALLLIFIIGMLKGIIYFGLSV, VLGVLTVLKSIGLAIFYVLFI, and MFILLFLNNFMLDLLGGLWII.

The protein belongs to the YggT family.

The protein localises to the cell membrane. This is an uncharacterized protein from Haemophilus influenzae (strain ATCC 51907 / DSM 11121 / KW20 / Rd).